The following is a 406-amino-acid chain: Argininosuccinate synthase (406 aa).

ATP-binding positions include 13–21 and Ala-40; that span reads AYSGGLDTS. Residues Tyr-91 and Ser-96 each contribute to the L-citrulline site. Gly-121 is a binding site for ATP. L-aspartate-binding residues include Thr-123, Asn-127, and Asp-128. Asn-127 is a binding site for L-citrulline. L-citrulline contacts are provided by Arg-131, Ser-180, Ser-189, Glu-265, and Tyr-277.

The protein belongs to the argininosuccinate synthase family. Type 1 subfamily. In terms of assembly, homotetramer.

The protein localises to the cytoplasm. The catalysed reaction is L-citrulline + L-aspartate + ATP = 2-(N(omega)-L-arginino)succinate + AMP + diphosphate + H(+). The protein operates within amino-acid biosynthesis; L-arginine biosynthesis; L-arginine from L-ornithine and carbamoyl phosphate: step 2/3. This Syntrophotalea carbinolica (strain DSM 2380 / NBRC 103641 / GraBd1) (Pelobacter carbinolicus) protein is Argininosuccinate synthase.